A 561-amino-acid polypeptide reads, in one-letter code: Acylcarnitine hydrolase (561 aa).

A signal peptide spans 1-26 (MARKQPHSWLNAVLFGLLLILIHVWG). Cysteine 97 and cysteine 125 are oxidised to a cystine. Serine 230 serves as the catalytic Acyl-ester intermediate. Cysteine 282 and cysteine 293 are joined by a disulfide. Active-site charge relay system residues include glutamate 347 and histidine 459.

It belongs to the type-B carboxylesterase/lipase family. Expressed in liver, stomach and kidney.

Its subcellular location is the microsome. It localises to the endoplasmic reticulum. The enzyme catalyses all-trans-retinyl hexadecanoate + H2O = all-trans-retinol + hexadecanoate + H(+). The catalysed reaction is an O-acyl-(R)-carnitine + H2O = (R)-carnitine + a fatty acid + H(+). Hydrolase with high activity towards palmitoylcarnitine. Is also active with p-nitrophenylacetate and alpha-naphthylacetate. May also hydrolyze retinyl esters. The protein is Acylcarnitine hydrolase of Rattus norvegicus (Rat).